We begin with the raw amino-acid sequence, 331 residues long: Protoheme IX farnesyltransferase (331 aa).

Helical transmembrane passes span 22 to 42, 50 to 70, 100 to 120, 147 to 167, 174 to 194, 220 to 240, 241 to 261, 273 to 293, and 307 to 327; these read LVKP…MWMA, FGVT…INMV, FAGI…NLLA, IVIG…AATG, WVMF…LAIL, ILLY…PLHV, LGSF…WKAV, ATSL…AMGL, and LASL…LGAM.

It belongs to the UbiA prenyltransferase family. Protoheme IX farnesyltransferase subfamily.

It localises to the cell inner membrane. The enzyme catalyses heme b + (2E,6E)-farnesyl diphosphate + H2O = Fe(II)-heme o + diphosphate. Its pathway is porphyrin-containing compound metabolism; heme O biosynthesis; heme O from protoheme: step 1/1. Functionally, converts heme B (protoheme IX) to heme O by substitution of the vinyl group on carbon 2 of heme B porphyrin ring with a hydroxyethyl farnesyl side group. The chain is Protoheme IX farnesyltransferase from Synechococcus sp. (strain JA-3-3Ab) (Cyanobacteria bacterium Yellowstone A-Prime).